A 930-amino-acid chain; its full sequence is APC membrane recruitment protein 1 (930 aa).

Disordered regions lie at residues 1 to 33 (MEIA…PPSV), 55 to 76 (FFGG…TKSQ), 104 to 133 (CSEP…LFSS), 161 to 193 (TVPG…NQTT), 222 to 245 (EMDK…RQEG), and 366 to 454 (EVCY…PRDS). The segment covering 222–242 (EMDKRRRAEEEGIGEDEKTGR) has biased composition (basic and acidic residues). Composition is skewed to polar residues over residues 377 to 399 (DSPS…SSPM) and 413 to 424 (SPQSDRQESVPN). The segment covering 439–452 (EESRERPHQERLPR) has biased composition (basic and acidic residues).

It belongs to the Amer family.

Its subcellular location is the cytoplasm. The protein localises to the cell membrane. It localises to the nucleus. Its function is as follows. Regulator of the canonical Wnt signaling pathway. Acts by specifically binding phosphatidylinositol 4,5-bisphosphate (PtdIns(4,5)P2), translocating to the cell membrane and interacting with key regulators of the canonical Wnt signaling pathway, such as components of the beta-catenin destruction complex. Acts both as a positive and negative regulator of the Wnt signaling pathway, depending on the context. The chain is APC membrane recruitment protein 1 (amer1) from Danio rerio (Zebrafish).